A 364-amino-acid chain; its full sequence is S-adenosylmethionine:tRNA ribosyltransferase-isomerase (364 aa).

It belongs to the QueA family. In terms of assembly, monomer.

It is found in the cytoplasm. The enzyme catalyses 7-aminomethyl-7-carbaguanosine(34) in tRNA + S-adenosyl-L-methionine = epoxyqueuosine(34) in tRNA + adenine + L-methionine + 2 H(+). Its pathway is tRNA modification; tRNA-queuosine biosynthesis. Transfers and isomerizes the ribose moiety from AdoMet to the 7-aminomethyl group of 7-deazaguanine (preQ1-tRNA) to give epoxyqueuosine (oQ-tRNA). The protein is S-adenosylmethionine:tRNA ribosyltransferase-isomerase of Bradyrhizobium sp. (strain BTAi1 / ATCC BAA-1182).